The primary structure comprises 172 residues: R-phycocyanin-2 beta chain (172 aa).

Position 72 is an N4-methylasparagine (Asn-72). Residue Cys-82 coordinates (2R,3E)-phycocyanobilin. Cys-153 provides a ligand contact to (2R,3E)-phycoerythrobilin.

This sequence belongs to the phycobiliprotein family. Heterodimer of an alpha and a beta chain. Post-translationally, contains two covalently linked bilin chromophores.

It is found in the cellular thylakoid membrane. In terms of biological role, light-harvesting photosynthetic bile pigment-protein from the phycobiliprotein complex. The chain is R-phycocyanin-2 beta chain (rpcB) from Synechococcus sp. (strain WH8103).